The sequence spans 220 residues: FMN-dependent NADH:quinone oxidoreductase 1 (220 aa).

18–20 (SVS) is a binding site for FMN.

It belongs to the azoreductase type 1 family. Homodimer. It depends on FMN as a cofactor.

It carries out the reaction 2 a quinone + NADH + H(+) = 2 a 1,4-benzosemiquinone + NAD(+). It catalyses the reaction N,N-dimethyl-1,4-phenylenediamine + anthranilate + 2 NAD(+) = 2-(4-dimethylaminophenyl)diazenylbenzoate + 2 NADH + 2 H(+). Quinone reductase that provides resistance to thiol-specific stress caused by electrophilic quinones. In terms of biological role, also exhibits azoreductase activity. Catalyzes the reductive cleavage of the azo bond in aromatic azo compounds to the corresponding amines. The sequence is that of FMN-dependent NADH:quinone oxidoreductase 1 from Bacillus anthracis.